Reading from the N-terminus, the 2587-residue chain is Protein KINKY POLLEN (2587 aa).

The first 27 residues, 1-27 (MAAFLVMFIFTIALFVALLWVFFKSLP), serve as a signal peptide directing secretion. Asn71 carries an N-linked (GlcNAc...) asparagine glycan. Positions 103-124 (PSHSSKGPRKPKTRKSSSGGKG) are disordered. The span at 108 to 117 (KGPRKPKTRK) shows a compositional bias: basic residues. Residues Asn262, Asn281, and Asn485 are each glycosylated (N-linked (GlcNAc...) asparagine). The tract at residues 270–290 (SKGEVIDSSSGNTTSEKPPKQ) is disordered. Residues 276–285 (DSSSGNTTSE) show a composition bias toward polar residues. Positions 589–611 (GSSSKNKQEKGAHRSKPPSGRGT) are disordered. A coiled-coil region spans residues 691–716 (TLNKEIQSTQVELETAKAIYQEFLEE). The tract at residues 784–814 (QHGNRNPEEASTVTGDKQKEEPTTTPNSLDK) is disordered. Residues Asn1155, Asn1250, Asn1281, and Asn1486 are each glycosylated (N-linked (GlcNAc...) asparagine). 3 disordered regions span residues 1571–1608 (HCSKPAQMSRTSSLSGSTDRVTSDNGTSTSDGTEKHPD), 1646–1673 (VDARSTKEKQSEPEENSHSDPSDDDGYN), and 1729–1797 (EGNQ…PEEE). The span at 1576 to 1590 (AQMSRTSSLSGSTDR) shows a compositional bias: polar residues. Residue Asn1595 is glycosylated (N-linked (GlcNAc...) asparagine). The segment covering 1646–1666 (VDARSTKEKQSEPEENSHSDP) has biased composition (basic and acidic residues). The span at 1746–1760 (KQPSTGSGNLASQSK) shows a compositional bias: polar residues. Asn1861, Asn1951, Asn1981, Asn2036, and Asn2278 each carry an N-linked (GlcNAc...) asparagine glycan. Residues 2006–2036 (IEEVELAKIELEAKERDRMMLLDDIRKLTQN) are a coiled coil. Residues 2274 to 2287 (QGSKNQSLKSSTIR) are compositionally biased toward polar residues. 3 disordered regions span residues 2274–2299 (QGSKNQSLKSSTIRGSGRELRRTSSF), 2319–2360 (SMEH…KKSR), and 2442–2469 (KDDIGLRDKDESGRTDQESGAWVKRPGD). 4 stretches are compositionally biased toward basic and acidic residues: residues 2289 to 2299 (SGRELRRTSSF), 2322 to 2336 (HQGESSKGKLKDSKT), 2343 to 2359 (SVHEEKKGEKSLEDKKS), and 2442 to 2458 (KDDIGLRDKDESGRTDQ). N-linked (GlcNAc...) asparagine glycosylation is found at Asn2513 and Asn2544. The disordered stretch occupies residues 2533–2587 (IRRHSKKFQNQNTTKGSKKTQLSPTLSPPKEEDQYESDSSSGSSAYEEFLDQNQI). Residues 2540–2557 (FQNQNTTKGSKKTQLSPT) are compositionally biased toward polar residues. The segment covering 2569–2579 (SDSSSGSSAYE) has biased composition (low complexity).

It belongs to the SABRE family. As to expression, mostly expressed in pollen and roots, especially in tip-growing cells, but also present in seedlings, stems, leaves, buds, flowers, siliques and seeds.

It localises to the secreted. It is found in the golgi apparatus. Its function is as follows. May be involved in membrane trafficking. Required for tip growth in pollen tubes and root hairs. The polypeptide is Protein KINKY POLLEN (Arabidopsis thaliana (Mouse-ear cress)).